The sequence spans 198 residues: Peptidyl-tRNA hydrolase (198 aa).

Tyr-18 is a tRNA binding site. The active-site Proton acceptor is His-23. TRNA is bound by residues Phe-69, Asn-71, and Asn-117.

It belongs to the PTH family. As to quaternary structure, monomer.

The protein localises to the cytoplasm. The catalysed reaction is an N-acyl-L-alpha-aminoacyl-tRNA + H2O = an N-acyl-L-amino acid + a tRNA + H(+). Its function is as follows. Hydrolyzes ribosome-free peptidyl-tRNAs (with 1 or more amino acids incorporated), which drop off the ribosome during protein synthesis, or as a result of ribosome stalling. Functionally, catalyzes the release of premature peptidyl moieties from peptidyl-tRNA molecules trapped in stalled 50S ribosomal subunits, and thus maintains levels of free tRNAs and 50S ribosomes. The protein is Peptidyl-tRNA hydrolase of Idiomarina loihiensis (strain ATCC BAA-735 / DSM 15497 / L2-TR).